The following is a 1138-amino-acid chain: Protein RECOGNITION OF PERONOSPORA PARASITICA 7 (1138 aa).

The 257-residue stretch at 166–422 (EENVKKLVGY…CNYVLSLSFE (257 aa)) folds into the NB-ARC domain. Residue 189 to 196 (GMGGLGKT) participates in ATP binding. LRR repeat units follow at residues 544 to 565 (QYPT…SLVV), 566 to 581 (VTLG…FTRL), 582 to 606 (ELLR…IGKL), 607 to 631 (IHLR…NLKL), 655 to 680 (MQEL…NLVK), 681 to 705 (LETL…RLRT), 707 to 726 (TIEL…IGGL), 727 to 752 (KYLE…VFDF), 754 to 774 (HLKR…QHFP), 775 to 797 (SHLT…ILEK), 798 to 825 (LLQL…GFPQ), 847 to 871 (MPLL…HLPS), 873 to 893 (LTAI…LERL), 894 to 918 (VHLK…GFPQ), 940 to 963 (MPRL…GFPQ), 1028 to 1050 (LEKL…RMVC), 1055 to 1078 (FPQL…QGSM), 1079 to 1103 (PLLH…RFIY), and 1115 to 1138 (KKRL…EFDD).

Belongs to the disease resistance NB-LRR family.

Disease resistance protein required for incompatible interactions with avirulent strains of Hyaloperonospora arabidopsidis (downy mildew), isolate Hpa-Hiks1 in cv. Columbia. In Arabidopsis thaliana (Mouse-ear cress), this protein is Protein RECOGNITION OF PERONOSPORA PARASITICA 7.